The chain runs to 332 residues: Diaminopimelate epimerase (332 aa).

Substrate is bound by residues N13 and N73. Catalysis depends on C82, which acts as the Proton donor. Substrate is bound by residues 83–84, N172, N209, and 227–228; these read GN and ER. Residue C236 is the Proton acceptor of the active site. A substrate-binding site is contributed by 237–238; sequence GT.

The protein belongs to the diaminopimelate epimerase family. Homodimer.

Its subcellular location is the cytoplasm. It carries out the reaction (2S,6S)-2,6-diaminopimelate = meso-2,6-diaminopimelate. The protein operates within amino-acid biosynthesis; L-lysine biosynthesis via DAP pathway; DL-2,6-diaminopimelate from LL-2,6-diaminopimelate: step 1/1. Catalyzes the stereoinversion of LL-2,6-diaminopimelate (L,L-DAP) to meso-diaminopimelate (meso-DAP), a precursor of L-lysine and an essential component of the bacterial peptidoglycan. The protein is Diaminopimelate epimerase of Lactiplantibacillus plantarum (strain ATCC BAA-793 / NCIMB 8826 / WCFS1) (Lactobacillus plantarum).